Consider the following 419-residue polypeptide: Diaminopimelate decarboxylase (419 aa).

N6-(pyridoxal phosphate)lysine is present on Lys-56. Residues Gly-234 and 274-277 (EPGR) contribute to the pyridoxal 5'-phosphate site. Residues Arg-277, Arg-312, and Tyr-316 each contribute to the substrate site. Cys-343 serves as the catalytic Proton donor. 2 residues coordinate substrate: Glu-344 and Tyr-372. Residue Tyr-372 participates in pyridoxal 5'-phosphate binding.

The protein belongs to the Orn/Lys/Arg decarboxylase class-II family. LysA subfamily. In terms of assembly, homodimer. Pyridoxal 5'-phosphate is required as a cofactor.

The enzyme catalyses meso-2,6-diaminopimelate + H(+) = L-lysine + CO2. The protein operates within amino-acid biosynthesis; L-lysine biosynthesis via DAP pathway; L-lysine from DL-2,6-diaminopimelate: step 1/1. In terms of biological role, specifically catalyzes the decarboxylation of meso-diaminopimelate (meso-DAP) to L-lysine. In Archaeoglobus fulgidus (strain ATCC 49558 / DSM 4304 / JCM 9628 / NBRC 100126 / VC-16), this protein is Diaminopimelate decarboxylase.